Here is a 171-residue protein sequence, read N- to C-terminus: Small ribosomal subunit protein uS13 (171 aa).

Over residues 1–11 (MAKGSANNVKV) the composition is skewed to polar residues. Disordered regions lie at residues 1–24 (MAKG…EKKE) and 144–164 (EKGK…GLSI). Positions 144–158 (EKGKKVRGQRTRSNG) are enriched in basic residues.

The protein belongs to the universal ribosomal protein uS13 family. As to quaternary structure, part of the 30S ribosomal subunit. Forms a loose heterodimer with protein S19. Forms two bridges to the 50S subunit in the 70S ribosome.

Its function is as follows. Located at the top of the head of the 30S subunit, it contacts several helices of the 16S rRNA. In the 70S ribosome it contacts the 23S rRNA (bridge B1a) and protein L5 of the 50S subunit (bridge B1b), connecting the 2 subunits; these bridges are implicated in subunit movement. The chain is Small ribosomal subunit protein uS13 from Thermoplasma acidophilum (strain ATCC 25905 / DSM 1728 / JCM 9062 / NBRC 15155 / AMRC-C165).